The chain runs to 343 residues: ATP-dependent (S)-NAD(P)H-hydrate dehydratase (343 aa).

A mitochondrion-targeting transit peptide spans M1–A42. The 292-residue stretch at L49–L340 folds into the YjeF C-terminal domain. An N6-acetyllysine modification is found at K63. Phosphotyrosine is present on Y81. Residues G149 and N202–R208 each bind (6S)-NADPHX. Position 216 is a phosphoserine (S216). ATP contacts are provided by residues K242–D246 and G261–G270. Position 271 (D271) interacts with (6S)-NADPHX.

The protein belongs to the NnrD/CARKD family. Requires Mg(2+) as cofactor.

It localises to the mitochondrion. It catalyses the reaction (6S)-NADHX + ATP = ADP + phosphate + NADH + H(+). The enzyme catalyses (6S)-NADPHX + ATP = ADP + phosphate + NADPH + H(+). In terms of biological role, catalyzes the dehydration of the S-form of NAD(P)HX at the expense of ATP, which is converted to ADP. Together with NAD(P)HX epimerase, which catalyzes the epimerization of the S- and R-forms, the enzyme allows the repair of both epimers of NAD(P)HX, a damaged form of NAD(P)H that is a result of enzymatic or heat-dependent hydration. In Mus musculus (Mouse), this protein is ATP-dependent (S)-NAD(P)H-hydrate dehydratase.